The chain runs to 816 residues: DNA helicase MCM8 (816 aa).

A disordered region spans residues 1-52; that stretch reads MNGKYRGRGFGQGRFQSWKSGRGGRGFSGKWREREHRPDLNKATGKHPEQTP. The segment covering 30-40 has biased composition (basic and acidic residues); sequence KWREREHRPDL. The MCM domain occupies 378–585; sequence LFKLIVNSLC…DHDHLLSEHV (208 aa). 430–437 provides a ligand contact to ATP; it reads GDPGLGKS. Ser606 carries the phosphoserine modification.

This sequence belongs to the MCM family. Component of the MCM8-MCM9 complex, which forms a hexamer composed of MCM8 and MCM9. Interacts with the DNA mismatch repair (MMR) complex composed at least of MSH2, MSH3, MSH6, PMS1 and MLH1. Interacts with RAD51; the interaction recruits RAD51 to DNA damage sites. Interacts with the MRN complex composed of MRE11, RAD50 and NBN/NBS1. Interacts with CDC6 and ORC2. Interacts with HROB; the interaction recruits the MCM8-MCM9 complex to DNA damage sites.

The protein localises to the nucleus. The protein resides in the chromosome. The enzyme catalyses ATP + H2O = ADP + phosphate + H(+). Its function is as follows. Component of the MCM8-MCM9 complex, a complex involved in the repair of double-stranded DNA breaks (DBSs) and DNA interstrand cross-links (ICLs) by homologous recombination (HR). Required for DNA resection by the MRE11-RAD50-NBN/NBS1 (MRN) complex by recruiting the MRN complex to the repair site and by promoting the complex nuclease activity. Probably by regulating the localization of the MNR complex, indirectly regulates the recruitment of downstream effector RAD51 to DNA damage sites including DBSs and ICLs. The MCM8-MCM9 complex is dispensable for DNA replication and S phase progression. However, may play a non-essential for DNA replication: may be involved in the activation of the prereplicative complex (pre-RC) during G(1) phase by recruiting CDC6 to the origin recognition complex (ORC). Probably by regulating HR, plays a key role during gametogenesis. Stabilizes MCM9 protein. This chain is DNA helicase MCM8 (MCM8), found in Bos taurus (Bovine).